Reading from the N-terminus, the 305-residue chain is Aspartate carbamoyltransferase catalytic subunit (305 aa).

2 residues coordinate carbamoyl phosphate: Arg-54 and Thr-55. Lys-83 contacts L-aspartate. Residues Arg-104, His-132, and Gln-135 each contribute to the carbamoyl phosphate site. Positions 165 and 226 each coordinate L-aspartate. Residues Leu-265 and Pro-266 each contribute to the carbamoyl phosphate site.

This sequence belongs to the aspartate/ornithine carbamoyltransferase superfamily. ATCase family. As to quaternary structure, heterooligomer of catalytic and regulatory chains.

The enzyme catalyses carbamoyl phosphate + L-aspartate = N-carbamoyl-L-aspartate + phosphate + H(+). It functions in the pathway pyrimidine metabolism; UMP biosynthesis via de novo pathway; (S)-dihydroorotate from bicarbonate: step 2/3. Catalyzes the condensation of carbamoyl phosphate and aspartate to form carbamoyl aspartate and inorganic phosphate, the committed step in the de novo pyrimidine nucleotide biosynthesis pathway. The sequence is that of Aspartate carbamoyltransferase catalytic subunit from Pyrobaculum arsenaticum (strain DSM 13514 / JCM 11321 / PZ6).